The chain runs to 689 residues: FACT complex subunit ssrp1-B (689 aa).

2 disordered regions span residues 434-565 and 592-689; these read DNKS…KRAT and KAGA…GESD. A compositionally biased stretch (acidic residues) spans 461–477; it reads EQDDDSDDESTDEDYDL. 4 stretches are compositionally biased toward basic and acidic residues: residues 478 to 491, 523 to 532, 538 to 563, and 601 to 628; these read DKDM…KDSS, IEPKKKESKE, EKKE…EPKR, and SADD…EYKK. Residues 561 to 627 constitute a DNA-binding region (HMG box); sequence PKRATTAYII…RYEAEMKEYK (67 aa). Positions 638–650 are enriched in polar residues; that stretch reads GPSTKKSSDQSPG.

The protein belongs to the SSRP1 family. As to quaternary structure, component of the FACT complex, a stable heterodimer of hmg-3 and spt-16. The FACT complex may also include hmg-4 instead of hmg-3. Expressed in the germline.

Its subcellular location is the nucleus. It localises to the chromosome. In terms of biological role, component of the FACT complex, a general chromatin factor that acts to reorganize nucleosomes. The FACT complex is involved in multiple processes that require DNA as a template such as mRNA elongation, DNA replication and DNA repair. During transcription elongation the FACT complex acts as a histone chaperone that both destabilizes and restores nucleosomal structure. It facilitates the passage of RNA polymerase II and transcription by promoting the dissociation of one histone H2A-H2B dimer from the nucleosome, then subsequently promotes the reestablishment of the nucleosome following the passage of RNA polymerase II. Binds specifically to double-stranded DNA. In embryos, may function redundantly with hmg-4 to promote cell cycle progression and development of the anterior pharynx. In the germline, acts non-redundantly with hmg-4 to play a role in oocyte development. This is FACT complex subunit ssrp1-B from Caenorhabditis elegans.